Here is a 220-residue protein sequence, read N- to C-terminus: Cytidylate kinase (220 aa).

9 to 17 (GPAASGKST) is an ATP binding site.

It belongs to the cytidylate kinase family. Type 1 subfamily.

Its subcellular location is the cytoplasm. It catalyses the reaction CMP + ATP = CDP + ADP. It carries out the reaction dCMP + ATP = dCDP + ADP. The chain is Cytidylate kinase from Thermotoga maritima (strain ATCC 43589 / DSM 3109 / JCM 10099 / NBRC 100826 / MSB8).